A 300-amino-acid polypeptide reads, in one-letter code: Putative zinc finger protein 705EP (300 aa).

The KRAB domain maps to 7–78 (VTFEDVAIDF…GREFLQDQNP (72 aa)). The C2H2-type 1; degenerate zinc-finger motif lies at 172-194 (YQCNLCEKAYTNCFHLRRPKMTH). C2H2-type zinc fingers lie at residues 200-222 (YTCH…EKTH) and 228-250 (YKCH…ERTH). A C2H2-type 4; degenerate zinc finger spans residues 256–278 (YECDNSGKAFSQSSGFRGNKIIH).

Belongs to the krueppel C2H2-type zinc-finger protein family.

Its subcellular location is the nucleus. May be involved in transcriptional regulation. This chain is Putative zinc finger protein 705EP, found in Homo sapiens (Human).